A 234-amino-acid polypeptide reads, in one-letter code: Geranylgeranylglyceryl phosphate synthase (234 aa).

Mg(2+) contacts are provided by D24 and S52. Sn-glycerol 1-phosphate is bound by residues 172–178 (YLEAGSG), 203–204 (GG), and 225–226 (GT).

Belongs to the GGGP/HepGP synthase family. Group II subfamily. In terms of assembly, homodimer. Mg(2+) serves as cofactor.

It carries out the reaction sn-glycerol 1-phosphate + (2E,6E,10E)-geranylgeranyl diphosphate = sn-3-O-(geranylgeranyl)glycerol 1-phosphate + diphosphate. In terms of biological role, prenyltransferase that catalyzes the transfer of the geranylgeranyl moiety of geranylgeranyl diphosphate (GGPP) to the C3 hydroxyl of sn-glycerol-1-phosphate (G1P). The chain is Geranylgeranylglyceryl phosphate synthase from Zunongwangia profunda (strain DSM 18752 / CCTCC AB 206139 / SM-A87) (Wangia profunda).